Reading from the N-terminus, the 238-residue chain is Ribonuclease PH (238 aa).

Residues Arg86 and Gly124–Arg126 contribute to the phosphate site.

This sequence belongs to the RNase PH family. As to quaternary structure, homohexameric ring arranged as a trimer of dimers.

It catalyses the reaction tRNA(n+1) + phosphate = tRNA(n) + a ribonucleoside 5'-diphosphate. In terms of biological role, phosphorolytic 3'-5' exoribonuclease that plays an important role in tRNA 3'-end maturation. Removes nucleotide residues following the 3'-CCA terminus of tRNAs; can also add nucleotides to the ends of RNA molecules by using nucleoside diphosphates as substrates, but this may not be physiologically important. Probably plays a role in initiation of 16S rRNA degradation (leading to ribosome degradation) during starvation. The polypeptide is Ribonuclease PH (Hahella chejuensis (strain KCTC 2396)).